Here is a 154-residue protein sequence, read N- to C-terminus: MDFPQRVNGWALYAHPCFQETYDALVAEVEALKGKDPENYQRKAATKLLAVVHKVIEEHITVNPSSPAFRHGKSLGSGKNKDWSRVKFGAGRYRLFFRYSEKEKVIILGWMNDENTLRTYGKKTDAYTVFSKMLKRGHPPADWESLTQETEESH.

As to quaternary structure, homohexamer; forms a complex with PrlF (SohA) with stoichiometry PrlF(2)-YhaV(4), possibly as a YhaV(2)-PrlF(2)-YhaV(2) complex like the MazFE complex. May dimerize in solution.

Its function is as follows. Toxic component of a type II toxin-antitoxin (TA) system. Has RNase activity in vitro. Acts as a transcription factor. The YhaV/PrlF complex binds the prlF-yhaV operon, probably negatively regulating its expression. The polypeptide is Toxin YhaV (yhaV) (Escherichia coli O6:H1 (strain CFT073 / ATCC 700928 / UPEC)).